The chain runs to 108 residues: Nitrite reductase (NADH) small subunit (108 aa).

This sequence to B.subtilis NasE. Associates with NirB.

Its subcellular location is the cytoplasm. The enzyme catalyses NH4(+) + 3 NAD(+) + 2 H2O = nitrite + 3 NADH + 5 H(+). Its function is as follows. Required for activity of the reductase. The sequence is that of Nitrite reductase (NADH) small subunit (nirD) from Escherichia coli O157:H7.